The following is a 112-amino-acid chain: Large ribosomal subunit protein uL22 (112 aa).

This sequence belongs to the universal ribosomal protein uL22 family. Part of the 50S ribosomal subunit.

In terms of biological role, this protein binds specifically to 23S rRNA; its binding is stimulated by other ribosomal proteins, e.g. L4, L17, and L20. It is important during the early stages of 50S assembly. It makes multiple contacts with different domains of the 23S rRNA in the assembled 50S subunit and ribosome. Its function is as follows. The globular domain of the protein is located near the polypeptide exit tunnel on the outside of the subunit, while an extended beta-hairpin is found that lines the wall of the exit tunnel in the center of the 70S ribosome. This is Large ribosomal subunit protein uL22 from Sorangium cellulosum (strain So ce56) (Polyangium cellulosum (strain So ce56)).